We begin with the raw amino-acid sequence, 224 residues long: Cytidylate kinase (224 aa).

Residue 11 to 19 (GPAAAGKST) coordinates ATP.

The protein belongs to the cytidylate kinase family. Type 1 subfamily.

The protein resides in the cytoplasm. The enzyme catalyses CMP + ATP = CDP + ADP. It carries out the reaction dCMP + ATP = dCDP + ADP. The sequence is that of Cytidylate kinase from Listeria innocua serovar 6a (strain ATCC BAA-680 / CLIP 11262).